The primary structure comprises 394 residues: Elongation factor Tu (394 aa).

One can recognise a tr-type G domain in the interval 10-204 (KEHANIGTIG…AVDDYIPTPE (195 aa)). The interval 19-26 (GHVDHGKT) is G1. Residue 19 to 26 (GHVDHGKT) participates in GTP binding. Thr26 contacts Mg(2+). Residues 60 to 64 (GITIN) are G2. Residues 81-84 (DCPG) are G3. Residues 81-85 (DCPGH) and 136-139 (NKVD) each bind GTP. A G4 region spans residues 136-139 (NKVD). A G5 region spans residues 174 to 176 (SAL).

The protein belongs to the TRAFAC class translation factor GTPase superfamily. Classic translation factor GTPase family. EF-Tu/EF-1A subfamily. Monomer.

The protein localises to the cytoplasm. The enzyme catalyses GTP + H2O = GDP + phosphate + H(+). In terms of biological role, GTP hydrolase that promotes the GTP-dependent binding of aminoacyl-tRNA to the A-site of ribosomes during protein biosynthesis. The protein is Elongation factor Tu of Staphylococcus haemolyticus (strain JCSC1435).